The chain runs to 1303 residues: Alpha,alpha-trehalose-phosphate synthase [UDP-forming] 2 (1303 aa).

Disordered stretches follow at residues Met1–Thr48 and Leu205–Lys251. Low complexity predominate over residues Ser212–Ser221.

It in the N-terminal section; belongs to the glycosyltransferase 20 family. This sequence in the C-terminal section; belongs to the gob-1 trehalose phosphatase family.

It catalyses the reaction D-glucose 6-phosphate + UDP-alpha-D-glucose = alpha,alpha-trehalose 6-phosphate + UDP + H(+). In terms of biological role, catalyzes the production of trehalose from glucose-6-phosphate and UDP-alpha-D-glucose in a 2 step process. This is Alpha,alpha-trehalose-phosphate synthase [UDP-forming] 2 (tps-2) from Aphelenchoides avenae (Mycophagous nematode worm).